We begin with the raw amino-acid sequence, 317 residues long: Melanocyte-stimulating hormone receptor (317 aa).

Residues 1 to 37 lie on the Extracellular side of the membrane; sequence MPAQGSQRSLLGSLNSTLMATSSLGLSANQSGPQCLE. Asn15 and Asn29 each carry an N-linked (GlcNAc...) asparagine glycan. Residues 38–63 form a helical membrane-spanning segment; sequence VSVPDGLFLCLGLVSLVENMLVVAAI. Residues 64-72 lie on the Cytoplasmic side of the membrane; it reads AKNRNLHSP. The chain crosses the membrane as a helical span at residues 73–93; that stretch reads MYCFICCLALSDLLVSVSNVL. The Extracellular portion of the chain corresponds to 94–118; that stretch reads ETAVMLLLEAGALAAQATVVQQLDN. A helical transmembrane segment spans residues 119–140; the sequence is IIDVLVCSSMVSSLCFLGAIAM. Over 141-163 the chain is Cytoplasmic; that stretch reads DRYISIFYALRYHSIVTLSRAQW. A helical transmembrane segment spans residues 164 to 183; sequence ATAAVWAAGILSSTLFIAYY. The Extracellular segment spans residues 184–191; it reads DHTAVLLC. The helical transmembrane segment at 192-211 threads the bilayer; sequence LVVFFLAMLVLMAVLYAHML. Residues 212-240 are Cytoplasmic-facing; that stretch reads TQACQHVQGITRLHKRQHLVQQGFGLKGA. Residues 241-266 form a helical membrane-spanning segment; sequence ATLTILLGVFLLCWGPFFLHLTLIAV. Topologically, residues 267-279 are extracellular; the sequence is CPQHPTCSCVFKN. A helical transmembrane segment spans residues 280-300; that stretch reads FKLFLALIICNAIVDPLIYAF. At 301-317 the chain is on the cytoplasmic side; the sequence is RXQELRKTLKEVLLFSW.

It belongs to the G-protein coupled receptor 1 family. In terms of assembly, interacts with MGRN1, but does not undergo MGRN1-mediated ubiquitination; this interaction competes with GNAS-binding and thus inhibits agonist-induced cAMP production. Interacts with OPN3; the interaction results in a decrease in MC1R-mediated cAMP signaling and ultimately a decrease in melanin production in melanocytes.

It localises to the cell membrane. In terms of biological role, receptor for MSH (alpha, beta and gamma) and ACTH. The activity of this receptor is mediated by G proteins which activate adenylate cyclase. Mediates melanogenesis, the production of eumelanin (black/brown) and phaeomelanin (red/yellow), via regulation of cAMP signaling in melanocytes. The protein is Melanocyte-stimulating hormone receptor (MC1R) of Loris tardigradus (Slender loris).